Here is a 642-residue protein sequence, read N- to C-terminus: Threonine--tRNA ligase (642 aa).

The TGS domain maps to 1-61 (MPVITLPDGS…ESDAQLAIIT (61 aa)). The interval 243–534 (DHRKIGKQLD…LTEEYAGFYP (292 aa)) is catalytic. The Zn(2+) site is built by cysteine 334, histidine 385, and histidine 511.

The protein belongs to the class-II aminoacyl-tRNA synthetase family. As to quaternary structure, homodimer. The cofactor is Zn(2+).

It localises to the cytoplasm. It carries out the reaction tRNA(Thr) + L-threonine + ATP = L-threonyl-tRNA(Thr) + AMP + diphosphate + H(+). Catalyzes the attachment of threonine to tRNA(Thr) in a two-step reaction: L-threonine is first activated by ATP to form Thr-AMP and then transferred to the acceptor end of tRNA(Thr). Also edits incorrectly charged L-seryl-tRNA(Thr). The chain is Threonine--tRNA ligase from Serratia proteamaculans (strain 568).